Reading from the N-terminus, the 551-residue chain is ATP-dependent RNA helicase MRH4, mitochondrial (551 aa).

A mitochondrion-targeting transit peptide spans 1 to 13; the sequence is MPPNLTPRSFNRD. The Q motif signature appears at 43–73; it reads RTFDDFGLEEGLVKSLKGLYGEDGKTTPIET. Residues 85 to 293 form the Helicase ATP-binding domain; the sequence is ASAPIGSQRV…TTNPFFTKKE (209 aa). An ATP-binding site is contributed by 98-105; the sequence is AETGSGKT. A DEAD box motif is present at residues 242–245; the sequence is DEAD. The 218-residue stretch at 334 to 551 folds into the Helicase C-terminal domain; it reads TLAEDAKAAK…VGAMGKRVRT (218 aa). The tract at residues 504–527 is disordered; that stretch reads LGEGAKNNKGGKGQGPLKKDGKTA.

This sequence belongs to the DEAD box helicase family. MRH4 subfamily.

It is found in the mitochondrion. The enzyme catalyses ATP + H2O = ADP + phosphate + H(+). ATP-binding RNA helicase involved in mitochondrial RNA metabolism. Required for maintenance of mitochondrial DNA. This Cryptococcus neoformans var. neoformans serotype D (strain B-3501A) (Filobasidiella neoformans) protein is ATP-dependent RNA helicase MRH4, mitochondrial (MRH4).